The following is a 343-amino-acid chain: Anthranilate phosphoribosyltransferase (343 aa).

5-phospho-alpha-D-ribose 1-diphosphate is bound by residues glycine 85, 88–89, threonine 93, 95–98, 113–121, and alanine 125; these read GD, NIST, and KHGGRSVSS. Anthranilate is bound at residue glycine 85. Serine 97 provides a ligand contact to Mg(2+). Residue arginine 171 coordinates anthranilate. The Mg(2+) site is built by aspartate 230 and glutamate 231.

This sequence belongs to the anthranilate phosphoribosyltransferase family. Homodimer. It depends on Mg(2+) as a cofactor.

It carries out the reaction N-(5-phospho-beta-D-ribosyl)anthranilate + diphosphate = 5-phospho-alpha-D-ribose 1-diphosphate + anthranilate. It participates in amino-acid biosynthesis; L-tryptophan biosynthesis; L-tryptophan from chorismate: step 2/5. In terms of biological role, catalyzes the transfer of the phosphoribosyl group of 5-phosphorylribose-1-pyrophosphate (PRPP) to anthranilate to yield N-(5'-phosphoribosyl)-anthranilate (PRA). The polypeptide is Anthranilate phosphoribosyltransferase (Aromatoleum aromaticum (strain DSM 19018 / LMG 30748 / EbN1) (Azoarcus sp. (strain EbN1))).